A 273-amino-acid polypeptide reads, in one-letter code: 5-deoxy-glucuronate isomerase (273 aa).

This sequence belongs to the isomerase IolB family.

The catalysed reaction is 5-deoxy-D-glucuronate = 5-dehydro-2-deoxy-D-gluconate. It participates in polyol metabolism; myo-inositol degradation into acetyl-CoA; acetyl-CoA from myo-inositol: step 4/7. Functionally, involved in the isomerization of 5-deoxy-glucuronate (5DG) to 5-dehydro-2-deoxy-D-gluconate (DKG or 2-deoxy-5-keto-D-gluconate). The chain is 5-deoxy-glucuronate isomerase from Listeria monocytogenes serotype 4a (strain HCC23).